The following is a 224-amino-acid chain: Elongation factor Ts (224 aa).

An involved in Mg(2+) ion dislocation from EF-Tu region spans residues 81–84; it reads TDFV.

Belongs to the EF-Ts family.

The protein localises to the cytoplasm. Associates with the EF-Tu.GDP complex and induces the exchange of GDP to GTP. It remains bound to the aminoacyl-tRNA.EF-Tu.GTP complex up to the GTP hydrolysis stage on the ribosome. The protein is Elongation factor Ts of Finegoldia magna (strain ATCC 29328 / DSM 20472 / WAL 2508) (Peptostreptococcus magnus).